Here is a 415-residue protein sequence, read N- to C-terminus: Glutamate-1-semialdehyde 2,1-aminomutase (415 aa).

The residue at position 260 (Lys260) is an N6-(pyridoxal phosphate)lysine.

This sequence belongs to the class-III pyridoxal-phosphate-dependent aminotransferase family. HemL subfamily. Pyridoxal 5'-phosphate is required as a cofactor.

It localises to the cytoplasm. The catalysed reaction is (S)-4-amino-5-oxopentanoate = 5-aminolevulinate. It functions in the pathway porphyrin-containing compound metabolism; protoporphyrin-IX biosynthesis; 5-aminolevulinate from L-glutamyl-tRNA(Glu): step 2/2. This is Glutamate-1-semialdehyde 2,1-aminomutase from Methanoculleus marisnigri (strain ATCC 35101 / DSM 1498 / JR1).